We begin with the raw amino-acid sequence, 532 residues long: Protein tweety homolog 2 (532 aa).

The Extracellular portion of the chain corresponds to 1 to 44 (MPAARVEYIAPWWVVWLHSVPHLGLRLQRVDSTFSPGDETYQES). A helical transmembrane segment spans residues 45–65 (LLFLGVLAAIGLGLNLIFLTV). Residues 66-87 (YLVCTCCCRRDHTVQTKQQESC) are Cytoplasmic-facing. Residues 88–108 (CVTWTAVVAGLLCCAAVGVGF) form a helical membrane-spanning segment. Residues 109 to 213 (YGNSETNDGM…QTAYVEYYRW (105 aa)) are Extracellular-facing. Residues Glu113 and Asp116 each coordinate Ca(2+). Residue Asn129 is glycosylated (N-linked (GlcNAc...) asparagine). The RGD motif lies at 164 to 166 (RGD). Phosphothreonine is present on Thr199. A helical membrane pass occupies residues 214–234 (LSYLLLFILDLVICLVTCLGL). Residues 235–240 (ARRSKC) are Cytoplasmic-facing. A helical membrane pass occupies residues 241 to 261 (LLASMLCCGILTLILSWASLA). Residues 262–385 (ADAAAAVGTS…DALTGICYDG (124 aa)) lie on the Extracellular side of the membrane. 2 disulfides stabilise this stretch: Cys274-Cys382 and Cys300-Cys367. N-linked (GlcNAc...) asparagine glycosylation is found at Asn283 and Asn352. A helical transmembrane segment spans residues 386–406 (IEGLLFLGLFSLLAALAFSTL). Over 407-532 (TCAGPRAWKY…EHLRHYEFPS (126 aa)) the chain is Cytoplasmic. Position 504 is a phosphoserine (Ser504). A PY-motif; mediates interaction with NEDD4L motif is present at residues 506–509 (PPTY).

The protein belongs to the tweety family. Forms cis-homodimers in the presence of Ca(+2) and forms monomers and trans-dimers in the absence of Ca(2+). Interacts with NEDD4L. Ubiquitinated by NEDD4L, leading to its proteasomal degradation.

It is found in the cell membrane. It carries out the reaction chloride(in) = chloride(out). The enzyme catalyses L-glutamate(out) = L-glutamate(in). With respect to regulation, inhibited by (4-[(2-butyl-6,7-dichloro-2- cyclopentyl-2,3-dihydro-1-oxo-1H-inden-5-yl)oxy]butanoic acid). Functionally, calcium-independent, swelling-dependent volume-regulated anion channel (VRAC-swell) which plays a pivotal role in the process of regulatory volume decrease (RVD) in the brain through the efflux of anions like chloride and organic osmolytes like glutamate. Probable large-conductance Ca(2+)-activated chloride channel. The protein is Protein tweety homolog 2 (Ttyh2) of Mus musculus (Mouse).